The sequence spans 220 residues: Deoxyribose-phosphate aldolase (220 aa).

Aspartate 89 acts as the Proton donor/acceptor in catalysis. Lysine 151 acts as the Schiff-base intermediate with acetaldehyde in catalysis. Lysine 180 serves as the catalytic Proton donor/acceptor.

Belongs to the DeoC/FbaB aldolase family. DeoC type 1 subfamily.

The protein resides in the cytoplasm. The catalysed reaction is 2-deoxy-D-ribose 5-phosphate = D-glyceraldehyde 3-phosphate + acetaldehyde. Its pathway is carbohydrate degradation; 2-deoxy-D-ribose 1-phosphate degradation; D-glyceraldehyde 3-phosphate and acetaldehyde from 2-deoxy-alpha-D-ribose 1-phosphate: step 2/2. In terms of biological role, catalyzes a reversible aldol reaction between acetaldehyde and D-glyceraldehyde 3-phosphate to generate 2-deoxy-D-ribose 5-phosphate. This is Deoxyribose-phosphate aldolase from Streptococcus suis (strain 98HAH33).